The chain runs to 35 residues: Photosystem II reaction center protein Y (35 aa).

Residues Met1 to Arg4 lie on the Lumenal side of the membrane. A helical membrane pass occupies residues Leu5 to Ile23. The Stromal segment spans residues Gly24 to Ser35.

The protein belongs to the PsbY family. In terms of assembly, PSII is composed of 1 copy each of membrane proteins PsbA, PsbB, PsbC, PsbD, PsbE, PsbF, PsbH, PsbI, PsbJ, PsbK, PsbL, PsbM, PsbT, PsbX, PsbY, PsbZ, Psb30/Ycf12, at least 3 peripheral proteins of the oxygen-evolving complex and a large number of cofactors. It forms dimeric complexes.

It is found in the plastid. Its subcellular location is the chloroplast thylakoid membrane. In terms of biological role, loosely associated component of the core of photosystem II (PSII), it is not always seen in crystals. PSII is a light-driven water plastoquinone oxidoreductase, using light energy to abstract electrons from H(2)O, generating a proton gradient subsequently used for ATP formation. The protein is Photosystem II reaction center protein Y of Emiliania huxleyi (Coccolithophore).